The sequence spans 317 residues: tRNA(Met) cytidine acetate ligase (317 aa).

ATP is bound by residues isoleucine 6–glutamine 19, glycine 100, asparagine 157, and arginine 182.

This sequence belongs to the TmcAL family.

The protein localises to the cytoplasm. The catalysed reaction is cytidine(34) in elongator tRNA(Met) + acetate + ATP = N(4)-acetylcytidine(34) in elongator tRNA(Met) + AMP + diphosphate. Functionally, catalyzes the formation of N(4)-acetylcytidine (ac(4)C) at the wobble position of elongator tRNA(Met), using acetate and ATP as substrates. First activates an acetate ion to form acetyladenylate (Ac-AMP) and then transfers the acetyl group to tRNA to form ac(4)C34. This is tRNA(Met) cytidine acetate ligase from Mesomycoplasma hyopneumoniae (strain 232) (Mycoplasma hyopneumoniae).